An 87-amino-acid chain; its full sequence is Mu-theraphotoxin-Cg1a (87 aa).

The signal sequence occupies residues 1 to 21 (MKVLVLITLAVLGAMFVWTSA). Residues 22 to 50 (AELEERGSDQRDSPAWVKSMERIFQSEER) constitute a propeptide that is removed on maturation. Cystine bridges form between C52–C66, C59–C71, and C65–C79.

This sequence belongs to the neurotoxin 10 (Hwtx-1) family. 39 (Jztx-34) subfamily. In terms of tissue distribution, expressed by the venom gland.

It localises to the secreted. In terms of biological role, potent and selective inhibitor of hNav1.7/SCN9A (IC(50)=610 nM). Also shows a weak activity towards Nav1.3/SCN3A (IC(50)=7950 nM). In addition, inhibits voltage-gated potassium channels (Kv) in rat DRG neurons. It does not alter the voltage dependence of activation, but it causes a small hyperpolarizing shift in the steady-state inactivations of Nav1.7/SNC9A. Chimera experiments show that the toxin binds to the DIIS3-S4 linker (site 4) of Nav1.7/SCN9A, whereas Nav1.7/SCN9A Asp-827 residue is shown by substitution experiments to be critical for its sensitivity. The toxin traps the domain II voltage sensor in the closed configuration, and not in an outward position. In vivo, shows analgesic activity in three rodent pain models (formalin-induced, acid-induced, and thermal). In Chilobrachys guangxiensis (Chinese earth tiger tarantula), this protein is Mu-theraphotoxin-Cg1a.